Consider the following 402-residue polypeptide: Multidrug resistance protein MdtH (402 aa).

10 helical membrane-spanning segments follow: residues 13 to 33, 34 to 54, 99 to 116, 139 to 159, 165 to 185, 214 to 234, 244 to 264, 277 to 297, 340 to 360, and 368 to 388; these read YFLLIDNLLVVLGFFVVFPLI, SIRFVDQLGWAALIVGIALGL, PWILWASCTLSALGGTLF, LLMMQDSAGAVIGALIGSWLL, YVCWAGAALFVLAAAWNAWLL, VLTLTGYYMLAVQVMLMLPIM, AVKWMYAIEAALSLTLLYPIA, LMFGLLLMTLSLFPLGLSTTL, LGLALGGALGYTGGGWMYDMG, and LPWALLGIIGMLTLALLYWQF.

Belongs to the major facilitator superfamily. DHA1 family. MdtH (TC 2.A.1.2.21) subfamily.

Its subcellular location is the cell inner membrane. The polypeptide is Multidrug resistance protein MdtH (Edwardsiella ictaluri (strain 93-146)).